Consider the following 545-residue polypeptide: Chaperonin GroEL (545 aa).

ATP is bound by residues 29–32 (TLGP), K50, 86–90 (DGTTT), G415, and D495.

The protein belongs to the chaperonin (HSP60) family. Forms a cylinder of 14 subunits composed of two heptameric rings stacked back-to-back. Interacts with the co-chaperonin GroES.

The protein localises to the cytoplasm. The catalysed reaction is ATP + H2O + a folded polypeptide = ADP + phosphate + an unfolded polypeptide.. Its function is as follows. Together with its co-chaperonin GroES, plays an essential role in assisting protein folding. The GroEL-GroES system forms a nano-cage that allows encapsulation of the non-native substrate proteins and provides a physical environment optimized to promote and accelerate protein folding. The sequence is that of Chaperonin GroEL from Bacteroides thetaiotaomicron (strain ATCC 29148 / DSM 2079 / JCM 5827 / CCUG 10774 / NCTC 10582 / VPI-5482 / E50).